A 407-amino-acid chain; its full sequence is CCCH-type zinc finger protein oma-1 (407 aa).

Residues 1-39 (MNVNGENNEKIDEHHLESSLAGVPTLPVSPLDHAKDLSQ) form a disordered region. Positions 7–17 (NNEKIDEHHLE) are enriched in basic and acidic residues. The interval 46-80 (IGDLVTQTANLIAIKKQLLEDIAFNQHIQSMQVRA) is required for taf-4 binding. 2 consecutive C3H1-type zinc fingers follow at residues 112–140 (SYKT…HGEE) and 154–182 (KYKT…HPDH). Thr239 carries the post-translational modification Phosphothreonine; by mbk-2 and GSK3. Ser302 bears the Phosphoserine; by mbk-2 mark. A Phosphothreonine; by GSK3 modification is found at Thr339.

Interacts with taf-4 (via C-terminus). Interacts with ifet-1. Component of a ribonucleoprotein particle complex that interacts with cgh-1 and car-1 in an RNA-dependent manner. Association with many proteins is dependent on the presence of RNA. In terms of processing, phosphorylation by mbk-2 and by gsk-3 are required for its rapid degradation following meiosis II. In terms of tissue distribution, exclusively expressed in the hermaphrodite gonad. Expressed prior to oocyte division. Widely distributed throughout gonadal oocytes from the mitotic stage to the developing diakinesis stage. Expressed in sperm.

Its subcellular location is the cytoplasm. The protein resides in the cytoplasmic granule. The protein localises to the nucleus. In terms of biological role, zinc-finger RNA-binding protein that binds to 5'-UA[AU]-3' motifs in the 3'-UTR of maternal mRNAs to suppress translation in oocytes and embryos. Acts as a ribonucleoprotein particle component that may exert part of its function within cytoplasmic foci of unfertilized oocytes. Acts redundantly with oma-2 to control the temporal expression and distribution of maternal proteins and thereby promote meiotic progression, oocyte maturation, fertilization and embryonic development. Recruits the translational repressor ifet-1 to the 3'-UTR of mei-1 and zif-1 to negatively regulate their translation. By suppressing the translation of the E3 ligase zif-1, may in turn play a role in the stabilization of zif-1 targets such as the maternal transcriptional repressor protein pie-1. Following fertilization, sequesters the transcription initiation factor, taf-4, in the cytoplasm, which prevents its nuclear localization and thus allows for transcriptional suppression in early embryos, but not in oocytes. Also, together with oma-2, is involved in P-granule distribution during embryonic development. This Caenorhabditis elegans protein is CCCH-type zinc finger protein oma-1.